Consider the following 166-residue polypeptide: Ribosome maturation factor RimM (166 aa).

The PRC barrel domain maps to 94–165 (EGEYYLGKLI…TIELKVLDLL (72 aa)).

Belongs to the RimM family. Binds ribosomal protein uS19.

The protein localises to the cytoplasm. Its function is as follows. An accessory protein needed during the final step in the assembly of 30S ribosomal subunit, possibly for assembly of the head region. Essential for efficient processing of 16S rRNA. May be needed both before and after RbfA during the maturation of 16S rRNA. It has affinity for free ribosomal 30S subunits but not for 70S ribosomes. This chain is Ribosome maturation factor RimM, found in Borreliella afzelii (strain PKo) (Borrelia afzelii).